The sequence spans 430 residues: Enolase (430 aa).

Glutamine 167 contributes to the (2R)-2-phosphoglycerate binding site. Glutamate 209 (proton donor) is an active-site residue. The Mg(2+) site is built by aspartate 245, glutamate 286, and aspartate 313. Residues lysine 338, arginine 367, serine 368, and lysine 389 each contribute to the (2R)-2-phosphoglycerate site. Lysine 338 functions as the Proton acceptor in the catalytic mechanism.

Belongs to the enolase family. Mg(2+) serves as cofactor.

The protein resides in the cytoplasm. It localises to the secreted. It is found in the cell surface. It catalyses the reaction (2R)-2-phosphoglycerate = phosphoenolpyruvate + H2O. It participates in carbohydrate degradation; glycolysis; pyruvate from D-glyceraldehyde 3-phosphate: step 4/5. Its function is as follows. Catalyzes the reversible conversion of 2-phosphoglycerate (2-PG) into phosphoenolpyruvate (PEP). It is essential for the degradation of carbohydrates via glycolysis. The polypeptide is Enolase (Synechococcus sp. (strain WH7803)).